An 837-amino-acid polypeptide reads, in one-letter code: Putative dimethyl sulfoxide reductase catalytic subunit A (837 aa).

A signal peptide (tat-type signal) is located at residues 1–36; that stretch reads MSDTDLNATRRDVLKSGAVAAVGLSGGGLLSTLQEA. One can recognise a 4Fe-4S Mo/W bis-MGD-type domain in the interval 53 to 110; the sequence is DQVVKTACSPNCRGKCPLDVFVRDGQIKKVEQQVPAAKTFKRGCTLGMTHLQRVYNAD. Cysteine 60, cysteine 64, cysteine 68, and cysteine 96 together coordinate [4Fe-4S] cluster. Residue asparagine 200 coordinates Mo-bis(molybdopterin guanine dinucleotide). The tract at residues 813–837 is disordered; it reads EHQSNEYTQHNPRGSSGTATDGDSS. A compositionally biased stretch (low complexity) spans 826 to 837; it reads GSSGTATDGDSS.

The protein belongs to the prokaryotic molybdopterin-containing oxidoreductase family. Probable multiprotein complex that likely consists of DmsA, DmsB and DmsC. It depends on Mo-bis(molybdopterin guanine dinucleotide) as a cofactor. [4Fe-4S] cluster serves as cofactor. Post-translationally, predicted to be exported by the Tat system. The position of the signal peptide cleavage has not been experimentally proven.

Its subcellular location is the cell membrane. The catalysed reaction is dimethyl sulfide + a menaquinone + H2O = dimethyl sulfoxide + a menaquinol. Functionally, dimethyl sulfoxide (DMSO) reductase catalyzes the reduction of dimethyl sulfoxide (DMSO) to dimethyl sulfide (DMS) during anaerobic respiration; it can also use trimethylamine N-oxide (TMAO) as terminal electron acceptor. Required for anaerobic respiration on DMSO and TMAO; subunit A is proposed to be catalytically active. The sequence is that of Putative dimethyl sulfoxide reductase catalytic subunit A (dmsA) from Halobacterium salinarum (strain ATCC 700922 / JCM 11081 / NRC-1) (Halobacterium halobium).